A 441-amino-acid chain; its full sequence is uncharacterized protein (441 aa).

57–64 (GVRRGGKT) contributes to the ATP binding site.

This is an uncharacterized protein from Methanocaldococcus jannaschii (strain ATCC 43067 / DSM 2661 / JAL-1 / JCM 10045 / NBRC 100440) (Methanococcus jannaschii).